The primary structure comprises 298 residues: HTH-type transcriptional regulator ArgP (298 aa).

The region spanning 4–60 (LDYKWIEALDAVVAQGGFERAAEELYISQSAVSQRIKQLERFLAQPVLIREQPPKPT) is the HTH lysR-type domain. Residues 21–40 (FERAAEELYISQSAVSQRIK) constitute a DNA-binding region (H-T-H motif).

Belongs to the LysR transcriptional regulatory family. In terms of assembly, homodimer.

Functionally, controls the transcription of genes involved in arginine and lysine metabolism. The protein is HTH-type transcriptional regulator ArgP of Vibrio vulnificus (strain CMCP6).